The primary structure comprises 553 residues: MKKKMSKLNARVHDFSMFKGNHIPRSKIHIPHKTIRAFNVGEIIPIYQTPVYPGEHIKMDLTSLYRPSTFIVPPMDDLIVDTYAFAVPWRIVWKDLEKFFGENSDSWDVKNAPPVPDIVAPSGGWDYGTLADHFGITPKVPGIRVKSLRFRAYAKIINDWFRDQNLSSECALTLDSSNSQGSNGSNQVTDIQLGGKPYIANKYHDYFTSCLPAPQKGAPTTLNVGGMAPVTTKFRDVPNLSGTPLIFRDNKGRTIKTGQLGIGPVDAGFLVAQNTAQAANGERAIPSNLWADLSNATGISISDLRLAITYQHYKEMDARGGTRYVEFTLNHFGVHTADARLQRSEFLGGHSQSLLVQSVPQTSSTVEKMTPQGNLAAFSETMIQNNYLVNKTFTEHSYIIVLAVVRYKHTYQQGIEADWFRGQDKFDMYDPLLANISEQPVKNREIMVQGNSQDNEIFGFQEAWADLRFKPNSVAGVMRSSHPQSLDYWHFADHYAQLPKLSSEWLKEDYKNVDRTLALKASDNTPQLRVDFMFNTIAEKPMPLYSTPGLRRI.

The protein belongs to the microviridae F protein family.

Its subcellular location is the virion. It localises to the host cytoplasm. Its function is as follows. Assembles to form an icosahedral capsid with a T=1 symmetry. This Spiroplasma virus 4 (SpV4) protein is Capsid protein VP1.